Here is a 45-residue protein sequence, read N- to C-terminus: Non-specific lipid-transfer protein (45 aa).

This sequence belongs to the plant LTP family. Expressed in pollen.

Its function is as follows. Plant non-specific lipid-transfer proteins transfer phospholipids as well as galactolipids across membranes. May play a role in wax or cutin deposition in the cell walls of expanding epidermal cells and certain secretory tissues. This chain is Non-specific lipid-transfer protein, found in Broussonetia papyrifera (Paper mulberry).